The following is a 716-amino-acid chain: Fatty acid oxidation complex subunit alpha (716 aa).

The enoyl-CoA hydratase/isomerase stretch occupies residues 1-189 (MIYQSPTIQV…KVGAVDAVVA (189 aa)). Residue Asp296 coordinates substrate. Residues 311-716 (KAVNSAAVLG…AANNGSYYQA (406 aa)) are 3-hydroxyacyl-CoA dehydrogenase. Residues Met324, Asp343, 400–402 (VVE), Lys407, and Ser429 contribute to the NAD(+) site. His450 functions as the For 3-hydroxyacyl-CoA dehydrogenase activity in the catalytic mechanism. Residue Asn453 participates in NAD(+) binding. Residues Asn500 and Tyr660 each coordinate substrate.

The protein in the N-terminal section; belongs to the enoyl-CoA hydratase/isomerase family. It in the C-terminal section; belongs to the 3-hydroxyacyl-CoA dehydrogenase family. Heterotetramer of two alpha chains (FadB) and two beta chains (FadA).

The catalysed reaction is a (3S)-3-hydroxyacyl-CoA + NAD(+) = a 3-oxoacyl-CoA + NADH + H(+). It carries out the reaction a (3S)-3-hydroxyacyl-CoA = a (2E)-enoyl-CoA + H2O. It catalyses the reaction a 4-saturated-(3S)-3-hydroxyacyl-CoA = a (3E)-enoyl-CoA + H2O. The enzyme catalyses (3S)-3-hydroxybutanoyl-CoA = (3R)-3-hydroxybutanoyl-CoA. The catalysed reaction is a (3Z)-enoyl-CoA = a 4-saturated (2E)-enoyl-CoA. It carries out the reaction a (3E)-enoyl-CoA = a 4-saturated (2E)-enoyl-CoA. The protein operates within lipid metabolism; fatty acid beta-oxidation. Functionally, involved in the aerobic and anaerobic degradation of long-chain fatty acids via beta-oxidation cycle. Catalyzes the formation of 3-oxoacyl-CoA from enoyl-CoA via L-3-hydroxyacyl-CoA. It can also use D-3-hydroxyacyl-CoA and cis-3-enoyl-CoA as substrate. This chain is Fatty acid oxidation complex subunit alpha, found in Shewanella oneidensis (strain ATCC 700550 / JCM 31522 / CIP 106686 / LMG 19005 / NCIMB 14063 / MR-1).